The following is a 516-amino-acid chain: Maturase K (516 aa).

The protein belongs to the intron maturase 2 family. MatK subfamily.

Its subcellular location is the plastid. It is found in the chloroplast. Usually encoded in the trnK tRNA gene intron. Probably assists in splicing its own and other chloroplast group II introns. The protein is Maturase K of Colchicum speciosum (Giant meadow saffron).